The following is a 78-amino-acid chain: Large ribosomal subunit protein bL28 (78 aa).

The protein belongs to the bacterial ribosomal protein bL28 family.

In Methylococcus capsulatus (strain ATCC 33009 / NCIMB 11132 / Bath), this protein is Large ribosomal subunit protein bL28.